We begin with the raw amino-acid sequence, 303 residues long: Propanal dehydrogenase (CoA-propanoylating) (303 aa).

12–15 (SGNI) contributes to the NAD(+) binding site. The Acyl-thioester intermediate role is filled by cysteine 127. Residues 158 to 166 (SAGPGTRAN) and asparagine 277 each bind NAD(+).

It belongs to the acetaldehyde dehydrogenase family. Monomer. Forms a heterotetramer composed of two aldolase (HsaF) and two dehydrogenase (HsaG) subunits.

It carries out the reaction propanal + NAD(+) + CoA = propanoyl-CoA + NADH + H(+). The enzyme catalyses acetaldehyde + NAD(+) + CoA = acetyl-CoA + NADH + H(+). Functionally, involved in cholesterol degradation. Catalyzes the conversion of propanal to propanoyl-CoA, using NAD(+) and coenzyme A. The polypeptide is Propanal dehydrogenase (CoA-propanoylating) (Mycobacterium bovis (strain ATCC BAA-935 / AF2122/97)).